Reading from the N-terminus, the 604-residue chain is MCGIVGVVGNRNATDILMQGLEKLEYRGYDSAGIFVANANQTNLIKSVGRIADLRAKIGIDVAGSTGIGHTRWATHGQSTEDNAHPHTSQTGRFVLVHNGVIENYLHIKTEFLAGHDFKGQTDTEIAVHLIGKFVEEDKLSVLEAFKKALSIIEGSYAFALMDSQATDTIYVAKNKSPLLIGLGEGYNMVCSDAMAMIRETSEFMEIHDKELVILTKDKVTVTDYDGKELIRDSYTAELDLSDIGKGTYPFYMLKEIDEQPTVMRQLISTYADETGNVQVDPAIITSIQEADRLYILAAGTSYHAGFATKNMLEQLTDTPVELGVASEWGYHMPLLSKKPMFILLSQSGETADSRQVLVKANAMGIPSLTVTNVPGSTLSRESTYTMLIHAGPEIAVASTKAYTAQIAALAFLAKAVGEANGKQEALDFNLVHELSLVAQSIEATLSEKDLVAEKVQALLTTTRNAFYIGRGNDYYVAMEAALKLKEISYIQCEGFAAGELKHGTISLIEEDTPVIALISSSQLVASHTRGNIQEVAARGAHVLTVVEEGLDREGDDIIVNKVHPFLAPIAMVIPTQLIAYYASLQRGLDVDKPRNLAKAVTVE.

Cys2 acts as the Nucleophile; for GATase activity in catalysis. The Glutamine amidotransferase type-2 domain maps to 2-218 (CGIVGVVGNR…DKELVILTKD (217 aa)). SIS domains lie at 284–423 (IITS…ANGK) and 452–594 (VAEK…VDKP). Lys599 (for Fru-6P isomerization activity) is an active-site residue.

Homodimer.

It localises to the cytoplasm. The catalysed reaction is D-fructose 6-phosphate + L-glutamine = D-glucosamine 6-phosphate + L-glutamate. Its function is as follows. Catalyzes the first step in hexosamine metabolism, converting fructose-6P into glucosamine-6P using glutamine as a nitrogen source. This Streptococcus pyogenes serotype M3 (strain ATCC BAA-595 / MGAS315) protein is Glutamine--fructose-6-phosphate aminotransferase [isomerizing].